The sequence spans 328 residues: Endo-beta-1,4-glucanase B (328 aa).

Residues 1 to 17 (MKVNTLLVAVAAGTAMA) form the signal peptide. Asn-95 carries an N-linked (GlcNAc...) asparagine glycan. Glu-155 serves as the catalytic Proton donor. Residue Glu-262 is the Nucleophile of the active site.

The protein belongs to the glycosyl hydrolase 5 (cellulase A) family.

Its subcellular location is the secreted. The enzyme catalyses Endohydrolysis of (1-&gt;4)-beta-D-glucosidic linkages in cellulose, lichenin and cereal beta-D-glucans.. Has endoglucanase activity on substrates containing beta-1,4 glycosidic bonds, like in carboxymethylcellulose (CMC), hydroxyethylcellulose (HEC) and beta-glucan. Involved in the degradation of complex natural cellulosic substrates. The polypeptide is Endo-beta-1,4-glucanase B (eglB) (Emericella nidulans (strain FGSC A4 / ATCC 38163 / CBS 112.46 / NRRL 194 / M139) (Aspergillus nidulans)).